Consider the following 153-residue polypeptide: Ribonuclease HI (153 aa).

In terms of domain architecture, RNase H type-1 spans 1 to 141 (MKSVNIFTDG…CDELAKLGAN (141 aa)). Mg(2+)-binding residues include aspartate 9, glutamate 47, aspartate 69, and aspartate 133.

This sequence belongs to the RNase H family. As to quaternary structure, monomer. Mg(2+) serves as cofactor.

The protein resides in the cytoplasm. It carries out the reaction Endonucleolytic cleavage to 5'-phosphomonoester.. Functionally, endonuclease that specifically degrades the RNA of RNA-DNA hybrids. The chain is Ribonuclease HI from Haemophilus ducreyi (strain 35000HP / ATCC 700724).